Reading from the N-terminus, the 489-residue chain is Transmembrane protein 161A (489 aa).

Residues 1-23 (MAVMGIQMVVTLLVASLMQRVSP) form the signal peptide. Residues 24-98 (HYSFGRWLLC…INTMDALVLR (75 aa)) lie on the Extracellular side of the membrane. The N-linked (GlcNAc...) asparagine glycan is linked to asparagine 34. A helical transmembrane segment spans residues 99–119 (YFLEYQWFIDFALYSTIIYLF). At 120-134 (TEAYYCVVDAQNEIN) the chain is on the cytoplasmic side. A helical transmembrane segment spans residues 135 to 155 (IGVLWCLMSIIFSIKVLFTVM). The Extracellular segment spans residues 156 to 166 (KHYFRSEEGGE). A helical transmembrane segment spans residues 167 to 187 (RSVCMTFAFFFLLIAMIVTIV). The Cytoplasmic portion of the chain corresponds to 188–224 (RDEYLEFGLEPGLASVCHNLENFLAQQGWQWSMPFVK). The chain crosses the membrane as a helical span at residues 225 to 245 (LAFKIALVALCAFLGGCLTFP). At 246–264 (GLRLAQTHLDALKMAADRP) the chain is on the extracellular side. A helical transmembrane segment spans residues 265–285 (MLQLLLHMSFLPPVIVVVLWI). The Cytoplasmic portion of the chain corresponds to 286–304 (RPITRDFLLNAPMGKESVE). A helical membrane pass occupies residues 305-325 (LMSNSAYNTFRLWIIVLLCLL). Residues 326–370 (RFCLTRFHLQAYLCLADRWVEQMKREAGRISMLEIQRKISRIFCY) lie on the Extracellular side of the membrane. The helical transmembrane segment at 371 to 391 (LTVVALQYLAPVILTFHCVFM) threads the bilayer. Residues 392–459 (LKSLGDYSWG…GLFTPLFFRG (68 aa)) are Cytoplasmic-facing. The tract at residues 413 to 432 (VDSSPVQSHSPTSEEEEDTE) is disordered. A helical membrane pass occupies residues 460-480 (IFSFLTWWVSVCQIITSLFGL). The Extracellular portion of the chain corresponds to 481 to 489 (YFHQYLGAS).

Belongs to the TMEM161 family.

It localises to the membrane. May play a role in protection against oxidative stress. This is Transmembrane protein 161A (tmem161a) from Xenopus laevis (African clawed frog).